Reading from the N-terminus, the 551-residue chain is Structure-specific endonuclease subunit MUS81 (551 aa).

Basic and acidic residues predominate over residues 84–93 (HRTSGGDHAP). Residues 84–130 (HRTSGGDHAPDSPSGENSPAPQGRLAEVQDSSMPVPAQPKAGGSGSY) are disordered. Phosphoserine is present on residues Ser-95 and Ser-101. Residues 125-244 (GGSGSYWPAR…PGEETAVPGA (120 aa)) are interaction with BLM. Positions 131–230 (WPARHSGARV…GLSLLNVGIG (100 aa)) are winged helix domain (WHD); critical for endonuclease activity. In terms of domain architecture, ERCC4 spans 270-372 (LLCVDIGETR…RRVYLVEEHG (103 aa)). Catalysis depends on residues Asp-274, Glu-277, and Asp-307. 5 residues coordinate Mg(2+): Asp-274, Glu-277, Asp-307, Glu-333, and Arg-334. Residues 471 to 545 (VREVFARQLM…LSRTLSQLYC (75 aa)) form a helix-hairpin-helix (2HhH); involved in DNA recognition and bending region.

The protein belongs to the XPF family. Part of the heterodimeric DNA structure-specific endonuclease complex MUS81-EME1. Part of the heterodimeric DNA structure-specific endonuclease complex MUS81-EME2. Interacts with BLM; may stimulate the endonuclease activity of MUS81. Interacts with SLX4/BTBD12; this interaction is direct and links the MUS81-EME1 complex to SLX4, which may coordinate the action of the structure-specific endonuclease during DNA repair. Interacts with DCLRE1B/Apollo. Interacts with RECQL5; this interaction stimulates mitotic DNA synthesis. Interacts with CHEK2. Mg(2+) serves as cofactor. In terms of tissue distribution, widely expressed.

It localises to the nucleus. Its subcellular location is the nucleolus. Catalytic subunit of two functionally distinct, structure-specific, heterodimeric DNA endonucleases MUS81-EME1 and MUS81-EME2 that are involved in the maintenance of genome stability. Both endonucleases have essentially the same substrate specificity though MUS81-EME2 is more active than its MUS81-EME1 counterpart. Both cleave 3'-flaps and nicked Holliday junctions, and exhibit limited endonuclease activity with 5' flaps and nicked double-stranded DNAs. MUS81-EME2 which is active during the replication of DNA is more specifically involved in replication fork processing. Replication forks frequently encounter obstacles to their passage, including DNA base lesions, DNA interstrand cross-links, difficult-to-replicate sequences, transcription bubbles, or tightly bound proteins. One mechanism for the restart of a stalled replication fork involves nucleolytic cleavage mediated by the MUS81-EME2 endonuclease. By acting upon the stalled fork, MUS81-EME2 generates a DNA double-strand break (DSB) that can be repaired by homologous recombination, leading to the restoration of an active fork. MUS81-EME2 could also function in telomere maintenance. MUS81-EME1, on the other hand, is active later in the cell cycle and functions in the resolution of mitotic recombination intermediates including the Holliday junctions, the four-way DNA intermediates that form during homologous recombination. The polypeptide is Structure-specific endonuclease subunit MUS81 (Homo sapiens (Human)).